Here is a 485-residue protein sequence, read N- to C-terminus: Rhamnulokinase (485 aa).

Residue A8 to R12 participates in ATP binding. Residues G78 and H231–T233 each bind substrate. Catalysis depends on D232, which acts as the Proton acceptor. Residue T254 participates in ATP binding. N291 lines the substrate pocket. Residue Q299 participates in ATP binding. Residues C348 and C365 are joined by a disulfide bond. Residue G397 participates in ATP binding. C408 and C412 are disulfide-bonded.

It belongs to the rhamnulokinase family. Mg(2+) is required as a cofactor.

It catalyses the reaction L-rhamnulose + ATP = L-rhamnulose 1-phosphate + ADP + H(+). It participates in carbohydrate degradation; L-rhamnose degradation; glycerone phosphate from L-rhamnose: step 2/3. Involved in the catabolism of L-rhamnose (6-deoxy-L-mannose). Catalyzes the transfer of the gamma-phosphate group from ATP to the 1-hydroxyl group of L-rhamnulose to yield L-rhamnulose 1-phosphate. The polypeptide is Rhamnulokinase (Yersinia pestis bv. Antiqua (strain Antiqua)).